A 533-amino-acid polypeptide reads, in one-letter code: Acid-sensing ion channel 3 (533 aa).

Residues methionine 1–arginine 19 lie on the Cytoplasmic side of the membrane. Residues valine 20–threonine 40 traverse the membrane as a helical segment. Residue threonine 40 is modified to Phosphothreonine; by PKC. Residues leucine 41–glutamate 435 are Extracellular-facing. 7 cysteine pairs are disulfide-bonded: cysteine 93–cysteine 187, cysteine 165–cysteine 172, cysteine 283–cysteine 372, cysteine 317–cysteine 368, cysteine 321–cysteine 366, cysteine 330–cysteine 352, and cysteine 332–cysteine 344. An N-linked (GlcNAc...) asparagine glycan is attached at asparagine 176. A disordered region spans residues alanine 286–proline 310. N-linked (GlcNAc...) asparagine glycosylation is present at asparagine 400. Residues leucine 436 to leucine 456 form a helical membrane-spanning segment. The short motif at glycine 449–serine 451 is the GAS motif; ion selectivity filter element. The Cytoplasmic portion of the chain corresponds to glutamate 457–leucine 533. Residue serine 523 is modified to Phosphoserine; by PKC. The PDZ-binding signature appears at valine 530 to leucine 533.

The protein belongs to the amiloride-sensitive sodium channel (TC 1.A.6) family. ASIC3 subfamily. Can form homotrimeric channels. Heterotrimer; forms functional heterotrimers producing channel with different properties. Forms heterotrimers with ASIC2; gives rise to a biphasic current with a sustained current which discriminates poorly between Na(+) and K(+). Interacts with STOM; inhibits ASIC3 acid-evoked current. Interacts with LIN7B (via PDZ domain); increases ASIC3 expression at the plasma membrane. Interacts with MAGI1 (via PDZ domain); probably regulates ASIC3. Interacts with GOPC (via PDZ domain); probably regulates ASIC3. Interacts with DLG4 (via PDZ domain); reduces ASIC3 expression at the plasma membrane. Could be phosphorylated by PKC, promoting activation of ASIC2/ASIC3 heterotrimers. In terms of tissue distribution, expressed in sciatic nerve and dorsal root ganglion (at protein level). Expressed in sensory neurons of dorsal root ganglion. Expressed in Golgi interneurons in the granular layer. Also found in superior cervical ganglia, spinal cord and brain stem.

Its subcellular location is the cell membrane. It localises to the cytoplasm. It catalyses the reaction Na(+)(in) = Na(+)(out). The catalysed reaction is K(+)(in) = K(+)(out). The enzyme catalyses Ca(2+)(in) = Ca(2+)(out). Its activity is regulated as follows. Inhibited by the diuretic drug amiloride. Inhibited by gadolinium ions. Inhibited by extracellular Ca(2+). Activated by lactate. Salicylic acid, diclofenac and aspirin inhibit the sustained current component. Activated by the vertebrate neuropeptides NPFF and NPSF, and the related FMRFamide. Specifically and reversibly inhibited by the a sea anemone toxin APETx2. ASIC3-containing channels are potentiated by the cono-RFamide CNF-Tx1.1, and probably CNF-Tx1.2 and CNF-Tx1.3 (AC P0DL71). In terms of biological role, forms pH-gated heterotrimeric sodium channels that act as postsynaptic excitatory receptors in the nervous system. Upon extracellular acidification, these channels generate a biphasic current with a fast inactivating and a slow sustained phase. ASIC3 is more sensitive to protons and gates between closed, open, and desensitized states faster than other ASICs. Displays high selectivity for sodium ions but can also permit the permeation of other cations. As a neuronal acid sensor, probably contributes to mechanoreception, acid nociception, and heat nociception. By forming heterotrimeric channels with ASIC2, generates a biphasic current with a fast inactivating and a slow sustained phase, which in sensory neurons is proposed to mediate the pain induced by acidosis that occurs in ischemic, damaged or inflamed tissues. This chain is Acid-sensing ion channel 3, found in Rattus norvegicus (Rat).